The sequence spans 35 residues: Mu-theraphotoxin-Pm1a (35 aa).

Disulfide bonds link C3-C17, C10-C22, and C16-C29. The residue at position 35 (F35) is a Phenylalanine amide.

It belongs to the neurotoxin 10 (Hwtx-1) family. 62 (Vatx) subfamily. In terms of tissue distribution, expressed by the venom gland.

It localises to the secreted. Its function is as follows. Gating-modifier toxin with weak activity on Nav1.7/SCN9A and Nav1.8/SCN10A. Inhibits Nav1.7/SCN9A peak current (IC(50)=334 nM) and shifts the voltage dependence of activation to more depolarised membrane potentials. Shows 21% peak current inhibition (at 10 uM) on Nav1.8/SCN10A sodium channels. This Poecilotheria metallica (Metallic blue ornamental tree spider) protein is Mu-theraphotoxin-Pm1a.